Here is a 75-residue protein sequence, read N- to C-terminus: Brevinin-2HS2A (75 aa).

A signal peptide spans 1-22 (MFTLKKPLLLLFFLGTISLSLC). Residues 23–40 (QEERDADEEEGEMIEEEV) constitute a propeptide that is removed on maturation. The cysteines at positions 69 and 75 are disulfide-linked.

Belongs to the frog skin active peptide (FSAP) family. Brevinin subfamily. Expressed by the skin glands.

It is found in the secreted. Its function is as follows. Has antimicrobial activity against some Gram-positive bacteria and fungi but has no activity against a range of Gram-negative bacteria except P.faecalis. Has antimicrobial activity against the Gram-positive bacteria S.aureus ATCC 25923 (MIC=19 uM), B.licheniformis X39 (MIC=37.5 uM) and R.rhodochrous X15 (MIC=9.5 uM), is virtually inactive against E.faecium 091299 (MIC=150 uM) and S.carnosus KHS (MIC=150 uM) and inactive against E.faecalis 981. Active against the Gram-negative bacterium P.faecalis X29 (MIC=9.5 uM) and is inactive against E.coli, P.aeruginosa and S.typhi. Active against C.albicans ATCC 2002 (MIC=19 uM) and is also active against the slime mold 090223 (MIC=37.5 uM). Has extremely low hemolytic activity against human erythrocytes (LC(50)=300 uM). This chain is Brevinin-2HS2A, found in Odorrana hainanensis (Odor frog).